The following is a 394-amino-acid chain: MHVIRETLKGGKGEVIKNPKVFIDPLSVFKEIPFREDILRDAAIAIRYFVKNEVKFSNLFLGLTGTGKTFVSKYIFNEIEEVKKEDEEYKDVKQAYVNCREVGGTPQAVLSSLAGKLTGFSVPKHGINLGEYIDKIKNGTRNIRAIIYLDEVDTLVKRRGGDIVLYQLLRSDANISVIMISNDINVRDYMEPRVLSSLGPSVIFKPYDAEQLKFILSKYAEYGLIKGTYDDEILSYIAAISAKEHGDARKAVNLLFRAAQLASGGGIIRKEHVDKAIVDYEQERLIEAVKALPFHYKLALRSLIESEDVMSAHKMYTDLCNKFKQKPLSYRRFSDIISELDMFGIVKIRIINRGRAGGVKKYALVEDKEKVLRALNETFEDSISIGDFDDVGEN.

Residues 66–70 and Tyr-207 each bind ATP; that span reads TGKTF.

Belongs to the CDC6/cdc18 family. Monomer. Interacts with Cdc6-1, Cdc6-2, MCM and PolB1.

Functionally, involved in regulation of DNA replication. May play essential roles in origin recognition and cell cycle control of replication. Binds to DNA, with a preference for molecules that contain a bubble, a fork, or a tail. Inhibits the binding of the MCM helicase to the origin DNA and inhibits its DNA helicase activity. Also regulates the DNA polymerase and the nuclease activities of PolB1. Inhibits the DNA-binding activity of Cdc6-1 and Cdc6-2. The protein is ORC1-type DNA replication protein 3 (cdc6-3) of Saccharolobus solfataricus (strain ATCC 35092 / DSM 1617 / JCM 11322 / P2) (Sulfolobus solfataricus).